The sequence spans 65 residues: Large ribosomal subunit protein bL35 (65 aa).

Positions 1-40 (MPKMKTNSGSKKRFALTGTGKIKRKHAFHSHILTKKSKKR) are disordered. Positions 21–40 (KIKRKHAFHSHILTKKSKKR) are enriched in basic residues.

The protein belongs to the bacterial ribosomal protein bL35 family.

This Bacteroides fragilis (strain ATCC 25285 / DSM 2151 / CCUG 4856 / JCM 11019 / LMG 10263 / NCTC 9343 / Onslow / VPI 2553 / EN-2) protein is Large ribosomal subunit protein bL35.